Reading from the N-terminus, the 139-residue chain is Cytochrome c-type biogenesis protein CcmE (139 aa).

The Cytoplasmic portion of the chain corresponds to 1-7 (MTKRQNR). The chain crosses the membrane as a helical; Signal-anchor for type II membrane protein span at residues 8–28 (MTLVALLVIGVSLTGYLGLKA). The Periplasmic segment spans residues 29–139 (FNENLLYFFS…ADALEKAKNK (111 aa)). Heme is bound by residues histidine 120 and tyrosine 124.

It belongs to the CcmE/CycJ family.

The protein localises to the cell inner membrane. Its function is as follows. Heme chaperone required for the biogenesis of c-type cytochromes. Transiently binds heme delivered by CcmC and transfers the heme to apo-cytochromes in a process facilitated by CcmF and CcmH. This is Cytochrome c-type biogenesis protein CcmE from Ruthia magnifica subsp. Calyptogena magnifica.